The following is a 407-amino-acid chain: SERPINE1 mRNA-binding protein 1 (407 aa).

Serine 25 is subject to Phosphoserine. A disordered region spans residues 33 to 227 (AAENKKKEAG…GSGSHNWGTV (195 aa)). The span at 51–68 (AKSAAQAAAQTNSNAAGK) shows a compositional bias: low complexity. Lysine 52 carries the N6-acetyllysine; alternate modification. Lysine 52 participates in a covalent cross-link: Glycyl lysine isopeptide (Lys-Gly) (interchain with G-Cter in SUMO1); alternate. At lysine 68 the chain carries N6-acetyllysine. Composition is skewed to basic and acidic residues over residues 70-80 (LRKESQKDRKN), 89-114 (VDKKEETQPPVALKKEGIRRVGRRPD), and 122-162 (KIID…DRPI). A Glycyl lysine isopeptide (Lys-Gly) (interchain with G-Cter in SUMO1); alternate cross-link involves residue lysine 102. Lysine 102 participates in a covalent cross-link: Glycyl lysine isopeptide (Lys-Gly) (interchain with G-Cter in SUMO2). Lysine 102 participates in a covalent cross-link: Glycyl lysine isopeptide (Lys-Gly) (interchain with G-Cter in SUMO2); alternate. N6-acetyllysine is present on residues lysine 122 and lysine 140. Residues 164–182 (GRGGLGRGRGGRGRGMGRG) are compositionally biased toward gly residues. Omega-N-methylarginine is present on residues arginine 165 and arginine 188. A compositionally biased stretch (basic and acidic residues) spans 183–199 (DGFDSRGKREFDRHSGS). Residues serine 197, serine 199, serine 203, serine 205, and serine 208 each carry the phosphoserine modification. Lysine 211 is subject to N6-acetyllysine; alternate. Lysine 211 is covalently cross-linked (Glycyl lysine isopeptide (Lys-Gly) (interchain with G-Cter in SUMO2); alternate). The residue at position 216 (arginine 216) is an Omega-N-methylarginine. Serine 221 carries the phosphoserine modification. Threonine 226 is modified (phosphothreonine). Lysine 228 is covalently cross-linked (Glycyl lysine isopeptide (Lys-Gly) (interchain with G-Cter in SUMO1); alternate). Lysine 228 participates in a covalent cross-link: Glycyl lysine isopeptide (Lys-Gly) (interchain with G-Cter in SUMO2); alternate. Serine 234 bears the Phosphoserine mark. Residues 242-256 (ISYNCSDLDQSNVTE) show a composition bias toward polar residues. 2 disordered regions span residues 242–291 (ISYN…TLDE) and 327–407 (SKSE…PALA). Residues 261–274 (GEEHPVADTENKEN) are compositionally biased toward basic and acidic residues. Lysine 280 participates in a covalent cross-link: Glycyl lysine isopeptide (Lys-Gly) (interchain with G-Cter in SUMO1); alternate. Lysine 280 is covalently cross-linked (Glycyl lysine isopeptide (Lys-Gly) (interchain with G-Cter in SUMO2)). Residue lysine 280 forms a Glycyl lysine isopeptide (Lys-Gly) (interchain with G-Cter in SUMO2); alternate linkage. Composition is skewed to basic and acidic residues over residues 281 to 291 (EEGPKEMTLDE) and 327 to 341 (SKSEEAHAEDSVMDH). At lysine 328 the chain carries N6-acetyllysine. At serine 329 the chain carries Phosphoserine. The span at 362 to 371 (GRPGRGGRGG) shows a compositional bias: gly residues. Omega-N-methylarginine occurs at positions 363, 366, and 369. Phosphoserine occurs at positions 391 and 393.

It belongs to the SERBP1-HABP4 family. In terms of assembly, associates with mature 80S ribosomes. Interacts with EEF2/eEF2; interaction sequesters EEF2/eEF2 at the A-site of the ribosome, thereby blocking the interaction sites of the mRNA-tRNA complex, promoting ribosome stabilization and hibernation. Interacts with SPIN1. Interacts with CHD3 and TDRD3. Interacts with ZDHHC17 (via ANK repeats). Post-translationally, phosphorylation by MTOR inhibits SERBP1 and relieves ribosome hibernation.

Functionally, ribosome-binding protein that promotes ribosome hibernation, a process during which ribosomes are stabilized in an inactive state and preserved from proteasomal degradation. Acts via its association with EEF2/eEF2 factor, sequestering EEF2/eEF2 at the A-site of the ribosome and promoting ribosome stabilization and storage in an inactive state. May also play a role in the regulation of mRNA stability: binds to the 3'-most 134 nt of the SERPINE1/PAI1 mRNA, a region which confers cyclic nucleotide regulation of message decay. Seems to play a role in PML-nuclear bodies formation. This is SERPINE1 mRNA-binding protein 1 from Oryctolagus cuniculus (Rabbit).